The sequence spans 565 residues: Protein NRT1/ PTR FAMILY 5.15 (565 aa).

A run of 2 helical transmembrane segments spans residues 49-67 (FAYF…GPLG) and 80-100 (WSGT…AYLG). Residue Thr-104 is modified to Phosphothreonine. A run of 10 helical transmembrane segments spans residues 110–130 (LIYI…IMGL), 142–162 (SIWV…GQGG), 189–209 (FFNW…IVVA), 217–237 (WAFG…IFLL), 331–351 (IPIW…ITFF), 368–388 (IPAA…VPLY), 409–429 (LQRI…AALV), 454–474 (IWWF…SMVG), 490–510 (IGLS…GFLI), and 534–554 (YFYW…LFIS).

The protein belongs to the major facilitator superfamily. Proton-dependent oligopeptide transporter (POT/PTR) (TC 2.A.17) family. As to expression, expressed in shoots, roots and leaves.

The protein resides in the membrane. This Arabidopsis thaliana (Mouse-ear cress) protein is Protein NRT1/ PTR FAMILY 5.15 (NPF5.15).